Here is a 323-residue protein sequence, read N- to C-terminus: tRNA dimethylallyltransferase (323 aa).

ATP is bound at residue 12–19; the sequence is GPTAAGKT. 14 to 19 serves as a coordination point for substrate; the sequence is TAAGKT. 2 interaction with substrate tRNA regions span residues 37-40 and 161-165; these read DSAL and QRLIR.

It belongs to the IPP transferase family. Monomer. It depends on Mg(2+) as a cofactor.

The enzyme catalyses adenosine(37) in tRNA + dimethylallyl diphosphate = N(6)-dimethylallyladenosine(37) in tRNA + diphosphate. In terms of biological role, catalyzes the transfer of a dimethylallyl group onto the adenine at position 37 in tRNAs that read codons beginning with uridine, leading to the formation of N6-(dimethylallyl)adenosine (i(6)A). In Pseudomonas putida (strain ATCC 700007 / DSM 6899 / JCM 31910 / BCRC 17059 / LMG 24140 / F1), this protein is tRNA dimethylallyltransferase.